Consider the following 374-residue polypeptide: Pre-B-cell leukemia transcription factor 4 (374 aa).

A PBC domain is found at P14–D209. A PBC-A region spans residues D21–G100. The segment at G103–D209 is PBC-B. The segment at residues A210–M272 is a DNA-binding region (homeobox; TALE-type). The interval Q333 to N374 is disordered. Residues L341 to T358 show a composition bias toward polar residues.

The protein belongs to the TALE/PBX homeobox family.

It is found in the nucleus. This is Pre-B-cell leukemia transcription factor 4 (PBX4) from Homo sapiens (Human).